We begin with the raw amino-acid sequence, 429 residues long: UDP-N-acetylglucosamine 1-carboxyvinyltransferase (429 aa).

Residue 22-23 coordinates phosphoenolpyruvate; it reads KN. Position 102 (R102) interacts with UDP-N-acetyl-alpha-D-glucosamine. The active-site Proton donor is C126. Position 126 is a 2-(S-cysteinyl)pyruvic acid O-phosphothioketal (C126). UDP-N-acetyl-alpha-D-glucosamine is bound by residues 131–135, D316, and I338; that span reads RPVDL.

The protein belongs to the EPSP synthase family. MurA subfamily.

Its subcellular location is the cytoplasm. It carries out the reaction phosphoenolpyruvate + UDP-N-acetyl-alpha-D-glucosamine = UDP-N-acetyl-3-O-(1-carboxyvinyl)-alpha-D-glucosamine + phosphate. It participates in cell wall biogenesis; peptidoglycan biosynthesis. Its function is as follows. Cell wall formation. Adds enolpyruvyl to UDP-N-acetylglucosamine. The polypeptide is UDP-N-acetylglucosamine 1-carboxyvinyltransferase (Rhodopseudomonas palustris (strain TIE-1)).